The following is a 2319-amino-acid chain: A-kinase anchor protein 6 (2319 aa).

Composition is skewed to polar residues over residues 1 to 12 and 324 to 339; these read MLTMSVTLSPLR and GVSS…AAQP. Disordered regions lie at residues 1 to 24, 301 to 369, 493 to 532, 566 to 614, and 691 to 757; these read MLTM…TDAS, VDDK…NATP, SRLK…VPNG, LQLQ…PSHV, and TRLG…SATK. Low complexity predominate over residues 340–351; that stretch reads SSETVQQESSSS. Composition is skewed to polar residues over residues 518–532 and 566–591; these read GKQA…VPNG and LQLQ…SDNI. Low complexity predominate over residues 697–711; it reads SPSSSSDIASSLGES. Residues 735 to 754 show a composition bias toward basic and acidic residues; it reads KYADEKSERASSSEKNESHS. Spectrin repeat units follow at residues 762 to 848 and 1036 to 1150; these read QKLM…QLLE and EKVD…LLDD. At S1073 the chain carries Phosphoserine. Residues 1250-1272 are disordered; the sequence is KLGETSNEDPGYDEEADNHGGSQ. The segment covering 1255-1265 has biased composition (acidic residues); the sequence is SNEDPGYDEEA. S1570 and S1595 each carry phosphoserine. 3 disordered regions span residues 1821–1842, 1900–1925, and 1963–1983; these read VSDE…PSDT, EGIP…SHGK, and KCPN…TEKS. Composition is skewed to polar residues over residues 1830–1842, 1911–1920, and 1972–1982; these read DISS…PSDT, NVTSKVSENL, and NQSTASTPTEK. A PKA-RII subunit binding domain region spans residues 2063-2076; that stretch reads IIDMASTALKSKSQ. Residues 2198–2215 show a composition bias toward low complexity; it reads FSDSSLSADDADTVALSS. The tract at residues 2198-2319 is disordered; sequence FSDSSLSADD…HEKRHRNMHR (122 aa).

Interacts with RII subunit of PKA, phosphatase 2B (calcineurin) and AKAP79. Interacts with SYNPO2. Highly expressed in cardiac and skeletal muscle, followed by brain.

Its subcellular location is the sarcoplasmic reticulum. It is found in the nucleus membrane. Functionally, binds to type II regulatory subunits of protein kinase A and anchors/targets them to the nuclear membrane or sarcoplasmic reticulum. May act as an adapter for assembling multiprotein complexes. In Homo sapiens (Human), this protein is A-kinase anchor protein 6 (AKAP6).